Reading from the N-terminus, the 147-residue chain is uncharacterized protein (147 aa).

Residues 1–137 form the HTH marR-type domain; that stretch reads MRDNTIGSLI…LYELMTKVHK (137 aa). Positions 53–76 form a DNA-binding region, H-T-H motif; the sequence is QMELAEKVTVTQGGISRMLTRLEK.

This is an uncharacterized protein from Bacillus cereus (strain ATCC 14579 / DSM 31 / CCUG 7414 / JCM 2152 / NBRC 15305 / NCIMB 9373 / NCTC 2599 / NRRL B-3711).